We begin with the raw amino-acid sequence, 521 residues long: RING-type E3 ubiquitin-protein ligase PPIL2 (521 aa).

The U-box domain occupies 35-108 (RRLPFDHCSL…GQYHCPVLYS (74 aa)). Positions 197-217 (LKNTNSETRETLQELYKEFKG) form a coiled coil. Residue lysine 216 forms a Glycyl lysine isopeptide (Lys-Gly) (interchain with G-Cter in SUMO2) linkage. Residues 278–433 (KKGYVRLHTN…EEVLICTTTV (156 aa)) enclose the PPIase cyclophilin-type domain. Positions 447–462 (QERKKTQHQVDPEAKV) are enriched in basic and acidic residues. Residues 447-521 (QERKKTQHQV…SRGFGDFSSW (75 aa)) are disordered. Positions 465-478 (SQPQPGNQGPQTYR) are enriched in polar residues. Position 483 is an N6-acetyllysine (lysine 483).

The protein belongs to the cyclophilin-type PPIase family. PPIL2 subfamily. In terms of assembly, component of the minor spliceosome, which splices U12-type introns. Within this complex, interacts with PRPF8/PRP8, EFTUD2/SNU114 and PLRG1. Interacts with isoform 2 of BSG. Interacts (via the PPIase cyclophilin-type domain) with CRNKL1; they may form a trimeric complex with HSP90.

It localises to the nucleus. The catalysed reaction is S-ubiquitinyl-[E2 ubiquitin-conjugating enzyme]-L-cysteine + [acceptor protein]-L-lysine = [E2 ubiquitin-conjugating enzyme]-L-cysteine + N(6)-ubiquitinyl-[acceptor protein]-L-lysine.. Its pathway is protein modification; protein ubiquitination. Functionally, has a ubiquitin-protein ligase activity acting as an E3 ubiquitin protein ligase or as an ubiquitin-ubiquitin ligase promoting elongation of ubiquitin chains on substrates. By mediating 'Lys-48'-linked polyubiquitination of proteins could target them for proteasomal degradation. May also function as a chaperone, playing a role in transport to the cell membrane of BSG/Basigin for instance. Probable inactive PPIase with no peptidyl-prolyl cis-trans isomerase activity. As a component of the minor spliceosome, involved in the splicing of U12-type introns in pre-mRNAs. In Mus musculus (Mouse), this protein is RING-type E3 ubiquitin-protein ligase PPIL2.